Consider the following 147-residue polypeptide: Hemoglobin subunit epsilon (147 aa).

The Globin domain maps to 3-147 (HFTAEEKAAI…VAIALGHKYH (145 aa)). Phosphoserine is present on residues Ser-14 and Ser-51. The heme b site is built by His-64 and His-93.

This sequence belongs to the globin family. In terms of assembly, heterotetramer of two alpha chains and two epsilon chains in early embryonic hemoglobin Gower-2; two zeta chains and two epsilon chains in early embryonic hemoglobin Gower-1. Red blood cells.

Its function is as follows. The epsilon chain is a beta-type chain of early mammalian embryonic hemoglobin. This is Hemoglobin subunit epsilon (HBE1) from Pithecia irrorata (Gray monk saki).